An 865-amino-acid chain; its full sequence is Adenylate cyclase (865 aa).

Residues 1 to 540 (MYLYIETLKQ…DISSHFPIRL (540 aa)) are catalytic. Residues 546–865 (KALYSPCEIR…FNDYQAVHHH (320 aa)) form a regulatory region.

Belongs to the adenylyl cyclase class-1 family.

It is found in the cytoplasm. The enzyme catalyses ATP = 3',5'-cyclic AMP + diphosphate. The protein is Adenylate cyclase (cya) of Proteus mirabilis.